A 476-amino-acid polypeptide reads, in one-letter code: Zinc transporter SLC39A7 (476 aa).

Residues 7 to 27 (APHWVAVGLLTWAALGLLVAG) traverse the membrane as a helical segment. A compositionally biased stretch (basic and acidic residues) spans 35-109 (HKDVEEDFHG…SHGHSHDSLH (75 aa)). A disordered region spans residues 35-131 (HKDVEEDFHG…HGTSREAGAP (97 aa)). H73 is subject to Pros-methylhistidine. Residues 110–120 (HGGHGHAHREH) are compositionally biased toward basic residues. Helical transmembrane passes span 146–166 (ALGATVLISAAPFFVLFLIPV), 177–197 (LQILLSFASGGLLGDAFLHLI), and 222–242 (GPILSVGLWVLSGIVAFLVVE). Residues 249 to 320 (KGGHGHSHGH…QSPEEEKAGS (72 aa)) are disordered. Basic and acidic residues predominate over residues 257–292 (GHGDRHAHGDSHTHGDRHECSSKEKPSTEEEKEVGG). At S283 the chain carries Phosphoserine. 2 helical membrane passes run 393-413 (VTAIGALAGTACALLTEGGAV) and 417-437 (VAGGAGPGWVLPFTAGGFIYV).

The protein belongs to the ZIP transporter (TC 2.A.5) family. KE4/Catsup subfamily. Homodimer. In terms of processing, methylation at some His residue by METTL9 leads to reduced zinc-binding. Post-translationally, rapidly phosphorylated by CK2 following Zn(2+) treatment. This phosphorylation is required for efficient cytosolic Zn(2+) release. In terms of tissue distribution, widely expressed. Highly expressed in the intestinal crypts.

Its subcellular location is the endoplasmic reticulum membrane. The protein resides in the golgi apparatus. The protein localises to the cis-Golgi network membrane. The catalysed reaction is Zn(2+)(in) = Zn(2+)(out). Functionally, transports Zn(2+) from the endoplasmic reticulum (ER)/Golgi apparatus to the cytosol, playing an essential role in the regulation of cytosolic zinc levels. Acts as a gatekeeper of zinc release from intracellular stores, requiring post-translational activation by phosphorylation, resulting in activation of multiple downstream pathways leading to cell growth and proliferation. Has an essential role in B cell development and is required for proper B cell receptor signaling. Plays an important role in maintaining intestinal epithelial homeostasis and skin dermis development by regulating ER function. Controls cell signaling pathways involved in glucose metabolism in skeletal muscle. Has a protective role against ER stress in different biological contexts. Mediates Zn(2+)-induced ferroptosis. The protein is Zinc transporter SLC39A7 (Slc39a7) of Mus musculus (Mouse).